We begin with the raw amino-acid sequence, 311 residues long: Acetyl-coenzyme A carboxylase carboxyl transferase subunit alpha (311 aa).

A CoA carboxyltransferase C-terminal domain is found at 36–286 (ELKKEVERVY…VNYFLKSLEE (251 aa)).

The protein belongs to the AccA family. In terms of assembly, acetyl-CoA carboxylase is a heterohexamer composed of biotin carboxyl carrier protein (AccB), biotin carboxylase (AccC) and two subunits each of ACCase subunit alpha (AccA) and ACCase subunit beta (AccD).

It localises to the cytoplasm. The enzyme catalyses N(6)-carboxybiotinyl-L-lysyl-[protein] + acetyl-CoA = N(6)-biotinyl-L-lysyl-[protein] + malonyl-CoA. The protein operates within lipid metabolism; malonyl-CoA biosynthesis; malonyl-CoA from acetyl-CoA: step 1/1. Functionally, component of the acetyl coenzyme A carboxylase (ACC) complex. First, biotin carboxylase catalyzes the carboxylation of biotin on its carrier protein (BCCP) and then the CO(2) group is transferred by the carboxyltransferase to acetyl-CoA to form malonyl-CoA. The polypeptide is Acetyl-coenzyme A carboxylase carboxyl transferase subunit alpha (Wolinella succinogenes (strain ATCC 29543 / DSM 1740 / CCUG 13145 / JCM 31913 / LMG 7466 / NCTC 11488 / FDC 602W) (Vibrio succinogenes)).